A 174-amino-acid polypeptide reads, in one-letter code: Cuticle protein 1 (174 aa).

Positions 1-18 are cleaved as a signal peptide; it reads MRFLIAFVAILGYASASA.

The protein localises to the secreted. In Lonomia obliqua (Moth), this protein is Cuticle protein 1.